A 624-amino-acid polypeptide reads, in one-letter code: Translocator protein BipB (624 aa).

The tract at residues 54-99 (LASEQCDAQPVTDDARLDRLDDKPALRAPRSDAAHAADGNARGNGG) is disordered. Positions 66 to 88 (DDARLDRLDDKPALRAPRSDAAH) are enriched in basic and acidic residues. Residues 313–343 (EMQAKREAELQKKSDEYQEQVKKAEEMQKTM) are a coiled coil. 3 consecutive transmembrane segments (helical) span residues 359–379 (FAAA…GLAL), 405–425 (AILK…LVAC), and 434–454 (LAGA…AAFV).

This sequence belongs to the SctE/SipB/YopB family.

Its subcellular location is the secreted. The protein resides in the host membrane. Functionally, plays a role in the bacterium-induced formation of multinucleated giant cell (MNGC), which is formed after host cell fusion, as well as in the intercellular spreading of bacteria and in the induction of apoptosis in macrophages. May act in concert with other effector proteins to induce fusion of host cell membranes. The polypeptide is Translocator protein BipB (bipB) (Burkholderia thailandensis (strain ATCC 700388 / DSM 13276 / CCUG 48851 / CIP 106301 / E264)).